Reading from the N-terminus, the 130-residue chain is D-ribose pyranase (130 aa).

The active-site Proton donor is the H20. Residues D28, H97, and 119–121 each bind substrate; that span reads YAN.

This sequence belongs to the RbsD / FucU family. RbsD subfamily. As to quaternary structure, homodecamer.

The protein resides in the cytoplasm. It carries out the reaction beta-D-ribopyranose = beta-D-ribofuranose. It functions in the pathway carbohydrate metabolism; D-ribose degradation; D-ribose 5-phosphate from beta-D-ribopyranose: step 1/2. In terms of biological role, catalyzes the interconversion of beta-pyran and beta-furan forms of D-ribose. The protein is D-ribose pyranase of Paracidovorax citrulli (strain AAC00-1) (Acidovorax citrulli).